Consider the following 364-residue polypeptide: 3-isopropylmalate dehydrogenase (364 aa).

Residue 79-92 participates in NAD(+) binding; the sequence is GPKWEHLPAAEQPE. Substrate contacts are provided by Arg100, Arg110, Arg139, and Asp228. Residues Asp228, Asp252, and Asp256 each contribute to the Mg(2+) site. 286–298 lines the NAD(+) pocket; the sequence is GSAPDIAGKDIAN.

It belongs to the isocitrate and isopropylmalate dehydrogenases family. LeuB type 1 subfamily. In terms of assembly, homodimer. The cofactor is Mg(2+). It depends on Mn(2+) as a cofactor.

It localises to the cytoplasm. The enzyme catalyses (2R,3S)-3-isopropylmalate + NAD(+) = 4-methyl-2-oxopentanoate + CO2 + NADH. It participates in amino-acid biosynthesis; L-leucine biosynthesis; L-leucine from 3-methyl-2-oxobutanoate: step 3/4. Functionally, catalyzes the oxidation of 3-carboxy-2-hydroxy-4-methylpentanoate (3-isopropylmalate) to 3-carboxy-4-methyl-2-oxopentanoate. The product decarboxylates to 4-methyl-2 oxopentanoate. This Sodalis glossinidius (strain morsitans) protein is 3-isopropylmalate dehydrogenase.